Consider the following 350-residue polypeptide: S-adenosylmethionine:tRNA ribosyltransferase-isomerase (350 aa).

It belongs to the QueA family. In terms of assembly, monomer.

It localises to the cytoplasm. The catalysed reaction is 7-aminomethyl-7-carbaguanosine(34) in tRNA + S-adenosyl-L-methionine = epoxyqueuosine(34) in tRNA + adenine + L-methionine + 2 H(+). Its pathway is tRNA modification; tRNA-queuosine biosynthesis. Functionally, transfers and isomerizes the ribose moiety from AdoMet to the 7-aminomethyl group of 7-deazaguanine (preQ1-tRNA) to give epoxyqueuosine (oQ-tRNA). This chain is S-adenosylmethionine:tRNA ribosyltransferase-isomerase, found in Bacillus cytotoxicus (strain DSM 22905 / CIP 110041 / 391-98 / NVH 391-98).